The sequence spans 64 residues: MTKGTPSQGKHNKGSNHIVCRRCGRRSFHVRKKVCAACGFGKSSKIKRFAWQWKKVTGKGNRVK.

Cys-20, Cys-23, Cys-35, and Cys-38 together coordinate Zn(2+). The C4-type zinc finger occupies Cys-20–Cys-38.

The protein belongs to the eukaryotic ribosomal protein eL37 family. Zn(2+) serves as cofactor.

Binds to the 23S rRNA. The polypeptide is Large ribosomal subunit protein eL37 (Methanococcus maripaludis (strain C5 / ATCC BAA-1333)).